Here is a 449-residue protein sequence, read N- to C-terminus: Adenylosuccinate synthetase isozyme 1 B (449 aa).

Residues 34 to 40 (GDEGKGK) and 62 to 64 (GHT) contribute to the GTP site. The active-site Proton acceptor is the aspartate 35. 2 residues coordinate Mg(2+): aspartate 35 and glycine 62. Aspartate 35 provides a ligand contact to substrate. IMP-binding positions include 35 to 38 (DEGK), 60 to 63 (NAGH), threonine 155, arginine 169, asparagine 248, threonine 263, and arginine 327. The active-site Proton donor is histidine 63. 323 to 329 (VTTGRKR) contributes to the substrate binding site. Residues arginine 329, 355 to 357 (KLD), and 437 to 440 (GVGK) each bind GTP.

It belongs to the adenylosuccinate synthetase family. Homodimer. Mg(2+) is required as a cofactor.

It is found in the cytoplasm. It catalyses the reaction IMP + L-aspartate + GTP = N(6)-(1,2-dicarboxyethyl)-AMP + GDP + phosphate + 2 H(+). The protein operates within purine metabolism; AMP biosynthesis via de novo pathway; AMP from IMP: step 1/2. In terms of biological role, component of the purine nucleotide cycle (PNC), which interconverts IMP and AMP to regulate the nucleotide levels in various tissues, and which contributes to glycolysis and ammoniagenesis. Catalyzes the first committed step in the biosynthesis of AMP from IMP. This chain is Adenylosuccinate synthetase isozyme 1 B (adss1b), found in Salmo salar (Atlantic salmon).